The chain runs to 215 residues: Ribosomal RNA small subunit methyltransferase G (215 aa).

Residues Gly-82, Met-87, Val-133 to Glu-134, and Arg-148 contribute to the S-adenosyl-L-methionine site.

Belongs to the methyltransferase superfamily. RNA methyltransferase RsmG family.

The protein resides in the cytoplasm. It carries out the reaction guanosine(527) in 16S rRNA + S-adenosyl-L-methionine = N(7)-methylguanosine(527) in 16S rRNA + S-adenosyl-L-homocysteine. In terms of biological role, specifically methylates the N7 position of guanine in position 527 of 16S rRNA. The chain is Ribosomal RNA small subunit methyltransferase G from Stutzerimonas stutzeri (strain A1501) (Pseudomonas stutzeri).